The chain runs to 338 residues: Ketol-acid reductoisomerase (NADP(+)) (338 aa).

The KARI N-terminal Rossmann domain maps to 1–181 (MTVYYDKDCN…GGGRTAIIET (181 aa)). Residues 24–27 (FGSQ), R47, S52, and 82–85 (DENQ) each bind NADP(+). H107 is a catalytic residue. G133 serves as a coordination point for NADP(+). One can recognise a KARI C-terminal knotted domain in the interval 182–327 (TFKDETETDL…VKLRTMMPWI (146 aa)). Residues D190, E194, E226, and E230 each contribute to the Mg(2+) site. Residue S251 coordinates substrate.

The protein belongs to the ketol-acid reductoisomerase family. Mg(2+) is required as a cofactor.

The enzyme catalyses (2R)-2,3-dihydroxy-3-methylbutanoate + NADP(+) = (2S)-2-acetolactate + NADPH + H(+). It catalyses the reaction (2R,3R)-2,3-dihydroxy-3-methylpentanoate + NADP(+) = (S)-2-ethyl-2-hydroxy-3-oxobutanoate + NADPH + H(+). It functions in the pathway amino-acid biosynthesis; L-isoleucine biosynthesis; L-isoleucine from 2-oxobutanoate: step 2/4. Its pathway is amino-acid biosynthesis; L-valine biosynthesis; L-valine from pyruvate: step 2/4. Functionally, involved in the biosynthesis of branched-chain amino acids (BCAA). Catalyzes an alkyl-migration followed by a ketol-acid reduction of (S)-2-acetolactate (S2AL) to yield (R)-2,3-dihydroxy-isovalerate. In the isomerase reaction, S2AL is rearranged via a Mg-dependent methyl migration to produce 3-hydroxy-3-methyl-2-ketobutyrate (HMKB). In the reductase reaction, this 2-ketoacid undergoes a metal-dependent reduction by NADPH to yield (R)-2,3-dihydroxy-isovalerate. The protein is Ketol-acid reductoisomerase (NADP(+)) of Sulfurimonas denitrificans (strain ATCC 33889 / DSM 1251) (Thiomicrospira denitrificans (strain ATCC 33889 / DSM 1251)).